The chain runs to 459 residues: tRNA modification GTPase MnmE (459 aa).

The (6S)-5-formyl-5,6,7,8-tetrahydrofolate site is built by Arg-20, Glu-85, and Arg-124. The region spanning 221 to 380 (GLSTVIIGRP…LEEAIQSLFY (160 aa)) is the TrmE-type G domain. Asn-231 lines the K(+) pocket. GTP-binding positions include 231–236 (NVGKSS), 250–256 (TDIPGTT), and 275–278 (DTAG). Residue Ser-235 participates in Mg(2+) binding. K(+) contacts are provided by Thr-250, Ile-252, and Thr-255. Thr-256 provides a ligand contact to Mg(2+). A (6S)-5-formyl-5,6,7,8-tetrahydrofolate-binding site is contributed by Lys-459.

It belongs to the TRAFAC class TrmE-Era-EngA-EngB-Septin-like GTPase superfamily. TrmE GTPase family. As to quaternary structure, homodimer. Heterotetramer of two MnmE and two MnmG subunits. Requires K(+) as cofactor.

It is found in the cytoplasm. In terms of biological role, exhibits a very high intrinsic GTPase hydrolysis rate. Involved in the addition of a carboxymethylaminomethyl (cmnm) group at the wobble position (U34) of certain tRNAs, forming tRNA-cmnm(5)s(2)U34. This chain is tRNA modification GTPase MnmE, found in Bacillus subtilis (strain 168).